A 308-amino-acid polypeptide reads, in one-letter code: Probable 5-dehydro-4-deoxyglucarate dehydratase (308 aa).

This sequence belongs to the DapA family.

The catalysed reaction is 5-dehydro-4-deoxy-D-glucarate + H(+) = 2,5-dioxopentanoate + CO2 + H2O. It participates in carbohydrate acid metabolism; D-glucarate degradation; 2,5-dioxopentanoate from D-glucarate: step 2/2. The protein is Probable 5-dehydro-4-deoxyglucarate dehydratase of Bacillus licheniformis (strain ATCC 14580 / DSM 13 / JCM 2505 / CCUG 7422 / NBRC 12200 / NCIMB 9375 / NCTC 10341 / NRRL NRS-1264 / Gibson 46).